We begin with the raw amino-acid sequence, 432 residues long: Trigger factor (432 aa).

One can recognise a PPIase FKBP-type domain in the interval 161–246 (EDRVTIDFTG…LKKVEERELP (86 aa)).

The protein belongs to the FKBP-type PPIase family. Tig subfamily.

Its subcellular location is the cytoplasm. The catalysed reaction is [protein]-peptidylproline (omega=180) = [protein]-peptidylproline (omega=0). In terms of biological role, involved in protein export. Acts as a chaperone by maintaining the newly synthesized protein in an open conformation. Functions as a peptidyl-prolyl cis-trans isomerase. The polypeptide is Trigger factor (Salmonella schwarzengrund (strain CVM19633)).